The chain runs to 272 residues: MASEFKKKAFWRAVIAEFLAMILFVFISIGAALGFNFPIEEKANQTVGRSQDIVKVSLAFGISIATMAQSVGHVSGAHLNPAVTLGCLLSCQISILKAVMYIIAQCLGAVVATAILSGITSGLENNSLGLNGLSPGVSAGQGLGVEILVTFQLVLCVVAVTDRRRHDVSGSVPLAIGLSVALGHLIAIDYTGCGMNPARSFGSAVLTKNFTYHWIFWVGPMIGGAAAAIIYDFILAPRTSDLTDRMKVWTNGQVEEYELDGDDNTRVEMKPK.

Residues 1-17 (MASEFKKKAFWRAVIAE) lie on the Cytoplasmic side of the membrane. Residues 18–35 (FLAMILFVFISIGAALGF) form a helical membrane-spanning segment. Residues 36–52 (NFPIEEKANQTVGRSQD) lie on the Extracellular side of the membrane. The N-linked (GlcNAc...) asparagine glycan is linked to Asn-44. The helical transmembrane segment at 53 to 71 (IVKVSLAFGISIATMAQSV) threads the bilayer. Residues 72–97 (GHVSGAHLNPAVTLGCLLSCQISILK) lie on the Cytoplasmic side of the membrane. The NPA 1 motif lies at 80 to 82 (NPA). The chain crosses the membrane as a helical span at residues 98–119 (AVMYIIAQCLGAVVATAILSGI). The Extracellular portion of the chain corresponds to 120–139 (TSGLENNSLGLNGLSPGVSA). A glycan (N-linked (GlcNAc...) asparagine) is linked at Asn-125. A helical transmembrane segment spans residues 140-160 (GQGLGVEILVTFQLVLCVVAV). At 161–168 (TDRRRHDV) the chain is on the cytoplasmic side. Residues 169–188 (SGSVPLAIGLSVALGHLIAI) traverse the membrane as a helical segment. Over 189–214 (DYTGCGMNPARSFGSAVLTKNFTYHW) the chain is Extracellular. Positions 196 to 198 (NPA) match the NPA 2 motif. N-linked (GlcNAc...) asparagine glycosylation is present at Asn-209. The helical transmembrane segment at 215–236 (IFWVGPMIGGAAAAIIYDFILA) threads the bilayer. Topologically, residues 237-272 (PRTSDLTDRMKVWTNGQVEEYELDGDDNTRVEMKPK) are cytoplasmic.

It belongs to the MIP/aquaporin (TC 1.A.8) family.

The protein localises to the membrane. In terms of biological role, forms a water-specific channel. This Pelophylax lessonae (Pool frog) protein is Aquaporin FA-CHIP (AQPA).